A 148-amino-acid polypeptide reads, in one-letter code: Transcriptional regulator MraZ (148 aa).

2 consecutive SpoVT-AbrB domains span residues Ala5–Ala51 and Ala80–Ala123.

It belongs to the MraZ family. As to quaternary structure, forms oligomers.

Its subcellular location is the cytoplasm. The protein resides in the nucleoid. The chain is Transcriptional regulator MraZ from Methylobacillus flagellatus (strain ATCC 51484 / DSM 6875 / VKM B-1610 / KT).